The chain runs to 643 residues: Long-chain fatty acid transport protein 4 (643 aa).

The next 2 membrane-spanning stretches (helical) occupy residues 20-42 (LPWTQVGFSLLFLYLGSGGWRFI) and 139-156 (FVGLWLGMAKLGVEAALI). Residue 243-254 (YIYTSGTTGLPK) participates in AMP binding.

Belongs to the ATP-dependent AMP-binding enzyme family. In terms of tissue distribution, expressed at highest levels in brain, testis, colon and kidney. Expressed at medium levels in heart and liver, small intestine and stomach. Expressed at low levels in peripheral leukocytes, bone marrow, skeletal muscle and aorta. Expressed in adipose tissue. Expressed in brain gray matter.

The protein localises to the endoplasmic reticulum membrane. It carries out the reaction a fatty acid(in) = a fatty acid(out). The enzyme catalyses (9Z,12Z)-octadecadienoate(out) = (9Z,12Z)-octadecadienoate(in). It catalyses the reaction (9Z)-octadecenoate(out) = (9Z)-octadecenoate(in). The catalysed reaction is hexadecanoate(out) = hexadecanoate(in). It carries out the reaction a long-chain fatty acid + ATP + CoA = a long-chain fatty acyl-CoA + AMP + diphosphate. The enzyme catalyses hexadecanoate + ATP + CoA = hexadecanoyl-CoA + AMP + diphosphate. It catalyses the reaction (E)-hexadec-2-enoate + ATP + CoA = (2E)-hexadecenoyl-CoA + AMP + diphosphate. The catalysed reaction is (9Z)-octadecenoate + ATP + CoA = (9Z)-octadecenoyl-CoA + AMP + diphosphate. It carries out the reaction (5Z,8Z,11Z,14Z)-eicosatetraenoate + ATP + CoA = (5Z,8Z,11Z,14Z)-eicosatetraenoyl-CoA + AMP + diphosphate. The enzyme catalyses a very long-chain fatty acid + ATP + CoA = a very long-chain fatty acyl-CoA + AMP + diphosphate. It catalyses the reaction tetracosanoate + ATP + CoA = tetracosanoyl-CoA + AMP + diphosphate. In terms of biological role, mediates the levels of long-chain fatty acids (LCFA) in the cell by facilitating their transport across cell membranes. Appears to be the principal fatty acid transporter in small intestinal enterocytes. Also functions as an acyl-CoA ligase catalyzing the ATP-dependent formation of fatty acyl-CoA using LCFA and very-long-chain fatty acids (VLCFA) as substrates, which prevents fatty acid efflux from cells and might drive more fatty acid uptake. Plays a role in the formation of the epidermal barrier. Required for fat absorption in early embryogenesis. Probably involved in fatty acid transport across the blood barrier. Indirectly inhibits RPE65 via substrate competition and via production of VLCFA derivatives like lignoceroyl-CoA. Prevents light-induced degeneration of rods and cones. This is Long-chain fatty acid transport protein 4 from Homo sapiens (Human).